We begin with the raw amino-acid sequence, 256 residues long: DNA repair protein RecO (256 aa).

Belongs to the RecO family.

Involved in DNA repair and RecF pathway recombination. This chain is DNA repair protein RecO, found in Desulforamulus reducens (strain ATCC BAA-1160 / DSM 100696 / MI-1) (Desulfotomaculum reducens).